The primary structure comprises 296 residues: Light-inducible protein CPRF3 (296 aa).

3 disordered regions span residues 1-27 (MSDG…ITTT), 98-165 (PNLA…GSLE), and 190-223 (RVND…KSDE). Positions 107-117 (VGRKISDEKGR) are enriched in basic and acidic residues. Low complexity predominate over residues 145–156 (SSSDNDCPSLSS). The region spanning 196-259 (ELKRQRRKQS…AEVTSENHSI (64 aa)) is the bZIP domain. Residues 198 to 220 (KRQRRKQSNRESARRSRLRKQAK) form a basic motif region. Positions 224 to 245 (LQERLDNLSKENRILRKNLQRI) are leucine-zipper.

It belongs to the bZIP family. As to quaternary structure, binds DNA as a dimer.

The protein resides in the nucleus. In terms of biological role, binds to the G-box-like motif (5'-ACGTGGC-3') of the chalcone synthase (CHS) gene promoter. G-box and G-box-like motifs are defined in promoters of certain plant genes which are regulated by such diverse stimuli as light-induction or hormone control. The polypeptide is Light-inducible protein CPRF3 (CPRF3) (Petroselinum crispum (Parsley)).